The following is a 259-amino-acid chain: Type III pantothenate kinase (259 aa).

ATP is bound at residue 6–13 (DIGNTNIT). 113 to 116 (GADR) serves as a coordination point for substrate. Asp-115 functions as the Proton acceptor in the catalytic mechanism. Position 135 (Asp-135) interacts with K(+). An ATP-binding site is contributed by Thr-138. Position 190 (Thr-190) interacts with substrate.

This sequence belongs to the type III pantothenate kinase family. In terms of assembly, homodimer. NH4(+) serves as cofactor. Requires K(+) as cofactor.

The protein localises to the cytoplasm. It carries out the reaction (R)-pantothenate + ATP = (R)-4'-phosphopantothenate + ADP + H(+). The protein operates within cofactor biosynthesis; coenzyme A biosynthesis; CoA from (R)-pantothenate: step 1/5. Catalyzes the phosphorylation of pantothenate (Pan), the first step in CoA biosynthesis. In Endomicrobium trichonymphae, this protein is Type III pantothenate kinase.